The chain runs to 191 residues: Putative zinc metalloprotease MJ0611 (191 aa).

The chain crosses the membrane as a helical span at residues 20–40 (AIAFIFSYPNFSILVFIISLI). His49 is a binding site for Zn(2+). Glu50 is an active-site residue. His53 is a binding site for Zn(2+). The next 4 membrane-spanning stretches (helical) occupy residues 73 to 93 (LILG…PGAV), 110 to 130 (LAGP…MLIF), 133 to 153 (GSLL…LAGF), and 171 to 191 (PFIW…MMFW).

The protein belongs to the peptidase M50B family. The cofactor is Zn(2+).

Its subcellular location is the cell membrane. This is Putative zinc metalloprotease MJ0611 from Methanocaldococcus jannaschii (strain ATCC 43067 / DSM 2661 / JAL-1 / JCM 10045 / NBRC 100440) (Methanococcus jannaschii).